A 397-amino-acid polypeptide reads, in one-letter code: MRCWLENLSGGRKMKFGEFGGRFVPEVLIPPLEELEKAYDRFKDDEEFKARLEYYLKSYAGRPTPLYFAENLSRELGVKIYLKREDLLHGGAHKINNTIGQALLAKFMGKKRVIAETGAGQHGVATAMAAALLGLEAEIYMGAEDYERQKMNVFRMELLGAKVTAVESGSRTLKDAINEALRDWVESFEHTHYLIGSVVGPHPFPTIVRDFQAVIGKEARRQIIEAEGGMPDAIIACVGGGSNAMGIFHPFLNDDVRLIGVEAGGEGIESGRHSASLTAGSKGVLHGMLSYFLQDEEGMMLDTHSVSAGLDYPGVGPEHAYLKETGRCEYVTVNDEEALRAFKTLSKLEGIIPALESAHAIAYAMKMAEEMQRDDVLVVNLSGRGDKDMDIVRRRLA.

The residue at position 94 (K94) is an N6-(pyridoxal phosphate)lysine.

This sequence belongs to the TrpB family. As to quaternary structure, tetramer of two alpha and two beta chains. Requires pyridoxal 5'-phosphate as cofactor.

The catalysed reaction is (1S,2R)-1-C-(indol-3-yl)glycerol 3-phosphate + L-serine = D-glyceraldehyde 3-phosphate + L-tryptophan + H2O. It functions in the pathway amino-acid biosynthesis; L-tryptophan biosynthesis; L-tryptophan from chorismate: step 5/5. In terms of biological role, the beta subunit is responsible for the synthesis of L-tryptophan from indole and L-serine. The sequence is that of Tryptophan synthase beta chain 1 (trpB1) from Archaeoglobus fulgidus (strain ATCC 49558 / DSM 4304 / JCM 9628 / NBRC 100126 / VC-16).